Reading from the N-terminus, the 1989-residue chain is Exophilin-5 (1989 aa).

The region spanning 7–63 (AFDFSFLNDEEARKILQVLERNEELQRAEKDRISKLQKTKRDIRWLQGVTGEWFEEI) is the RabBD domain. Disordered regions lie at residues 93–117 (NDPI…PFSS) and 348–391 (TQSK…FLRA). Composition is skewed to polar residues over residues 100-111 (TSRSKNVTNQKK) and 359-376 (HQQS…WNRS). Residues 377–389 (DSSRDRENQEEFL) are compositionally biased toward basic and acidic residues. At S603 the chain carries Phosphoserine. Disordered regions lie at residues 631 to 651 (FSQI…NPTV), 806 to 827 (STAS…RTDQ), and 882 to 933 (AALP…NQKN). Over residues 641–651 (PQSPNLQNPTV) the composition is skewed to polar residues. A phosphoserine mark is found at S806 and S809. Polar residues predominate over residues 891–909 (KNSSLDAPVVPSTTVFSRR). The span at 910–927 (SPSDKDPSLGEREEKDNA) shows a compositional bias: basic and acidic residues. 2 positions are modified to phosphoserine: S1028 and S1086. Disordered regions lie at residues 1094–1113 (EATE…VRKG), 1124–1152 (SCPS…ASEL), and 1365–1493 (EIFS…TNCQ). A compositionally biased stretch (polar residues) spans 1098-1110 (RMTNVKSSGSTSV). S1124 carries the post-translational modification Phosphoserine. Over residues 1379–1390 (SENKKERGKKLQ) the composition is skewed to basic and acidic residues. The span at 1416–1431 (SINSSNSGPSSLPALS) shows a compositional bias: low complexity. Residues 1434-1447 (NIGNSQTRRSSWEC) show a composition bias toward polar residues. A Phosphoserine modification is found at S1505. 2 disordered regions span residues 1521–1590 (EETQ…NRSS) and 1644–1737 (PEPT…PITF). Composition is skewed to basic and acidic residues over residues 1551 to 1560 (ESRKAEDEMQ), 1573 to 1589 (NKNK…ENRS), and 1658 to 1670 (RLSE…KKSE). Over residues 1685-1709 (THVSNQKSNSISQRHQNEFKNVSES) the composition is skewed to polar residues. Phosphoserine is present on residues S1753, S1768, S1821, and S1851. Residues 1921–1989 (FLKDDLRNPP…LDENDKESEL (69 aa)) are disordered. Low complexity predominate over residues 1933–1943 (SESLSSNSPSS). The segment covering 1959–1989 (YEDDPVDSDCDTDTTTDDEYYLDENDKESEL) has biased composition (acidic residues).

In terms of assembly, interacts with RAB27A. Expressed in keratinocytes.

May act as Rab effector protein and play a role in vesicle trafficking. The polypeptide is Exophilin-5 (Homo sapiens (Human)).